The following is a 916-amino-acid chain: Protein translocase subunit SecA (916 aa).

ATP is bound by residues glutamine 87, 105 to 109 (GEGKT), and aspartate 507. Residues cysteine 900, cysteine 902, cysteine 911, and histidine 912 each coordinate Zn(2+).

Belongs to the SecA family. As to quaternary structure, monomer and homodimer. Part of the essential Sec protein translocation apparatus which comprises SecA, SecYEG and auxiliary proteins SecDF-YajC and YidC. The cofactor is Zn(2+).

It is found in the cell inner membrane. Its subcellular location is the cytoplasm. The catalysed reaction is ATP + H2O + cellular proteinSide 1 = ADP + phosphate + cellular proteinSide 2.. Its function is as follows. Part of the Sec protein translocase complex. Interacts with the SecYEG preprotein conducting channel. Has a central role in coupling the hydrolysis of ATP to the transfer of proteins into and across the cell membrane, serving both as a receptor for the preprotein-SecB complex and as an ATP-driven molecular motor driving the stepwise translocation of polypeptide chains across the membrane. This is Protein translocase subunit SecA from Neisseria meningitidis serogroup A / serotype 4A (strain DSM 15465 / Z2491).